Here is a 404-residue protein sequence, read N- to C-terminus: Cysteine desulfurase IscS (404 aa).

Residues 75–76 (AT), Asn-155, Gln-183, and 203–205 (SAH) contribute to the pyridoxal 5'-phosphate site. Position 206 is an N6-(pyridoxal phosphate)lysine (Lys-206). Thr-243 is a pyridoxal 5'-phosphate binding site. Cys-328 serves as the catalytic Cysteine persulfide intermediate. Cys-328 lines the [2Fe-2S] cluster pocket.

It belongs to the class-V pyridoxal-phosphate-dependent aminotransferase family. NifS/IscS subfamily. As to quaternary structure, homodimer. Forms a heterotetramer with IscU, interacts with other sulfur acceptors. It depends on pyridoxal 5'-phosphate as a cofactor.

Its subcellular location is the cytoplasm. The catalysed reaction is (sulfur carrier)-H + L-cysteine = (sulfur carrier)-SH + L-alanine. The protein operates within cofactor biosynthesis; iron-sulfur cluster biosynthesis. In terms of biological role, master enzyme that delivers sulfur to a number of partners involved in Fe-S cluster assembly, tRNA modification or cofactor biosynthesis. Catalyzes the removal of elemental sulfur atoms from cysteine to produce alanine. Functions as a sulfur delivery protein for Fe-S cluster synthesis onto IscU, an Fe-S scaffold assembly protein, as well as other S acceptor proteins. This Neisseria meningitidis serogroup C (strain 053442) protein is Cysteine desulfurase IscS.